Consider the following 347-residue polypeptide: Indole-3-glycerol phosphate lyase, chloroplastic (347 aa).

2 disordered regions span residues 1–38 and 64–89; these read MAFA…TPRR and APPQ…RSRP. The transit peptide at 1–53 directs the protein to the chloroplast; the sequence is MAFAPKTSSSSSLSSALQAAQSPPLLLRRMSSTATPRRRYDAAVVVTTTTTAR. The span at 8 to 27 shows a compositional bias: low complexity; the sequence is SSSSSLSSALQAAQSPPLLL. Residues 64 to 76 are compositionally biased toward pro residues; the sequence is APPQAPAPAPVPP.

Belongs to the TrpA family. In terms of assembly, tetramer of two alpha and two beta chains for the tryptophan synthase activity. Homodimer of alpha chains for the indole-3-glycerol phosphate lyase activity.

The protein resides in the plastid. Its subcellular location is the chloroplast. It carries out the reaction (1S,2R)-1-C-(indol-3-yl)glycerol 3-phosphate = indole + D-glyceraldehyde 3-phosphate. The catalysed reaction is (1S,2R)-1-C-(indol-3-yl)glycerol 3-phosphate + L-serine = D-glyceraldehyde 3-phosphate + L-tryptophan + H2O. It participates in secondary metabolite biosynthesis; 2,4-dihydroxy-1,4-benzoxazin-3-one biosynthesis; 2,4-dihydroxy-1,4-benzoxazin-3-one from indoleglycerol phosphate: step 1/5. Its pathway is amino-acid biosynthesis; L-tryptophan biosynthesis; L-tryptophan from chorismate: step 5/5. Its function is as follows. The alpha subunit is responsible for the aldol cleavage of indoleglycerol phosphate to indole and glyceraldehyde 3-phosphate. In bacteria, tryptophan synthase alpha (TSA) activity is almost completely dependent on formation of an active alpha2beta2 complex with tryptophan synthase beta (TSB), and indole is usually not released during tryptophan synthesis. In maize, the TSA homolog BX1 catalyzes the formation of free indole from indole-3-glycerol phosphate, independently of TSB. The polypeptide is Indole-3-glycerol phosphate lyase, chloroplastic (BX1) (Zea mays (Maize)).